The sequence spans 225 residues: 2-C-methyl-D-erythritol 4-phosphate cytidylyltransferase (225 aa).

It belongs to the IspD/TarI cytidylyltransferase family. IspD subfamily.

It catalyses the reaction 2-C-methyl-D-erythritol 4-phosphate + CTP + H(+) = 4-CDP-2-C-methyl-D-erythritol + diphosphate. It functions in the pathway isoprenoid biosynthesis; isopentenyl diphosphate biosynthesis via DXP pathway; isopentenyl diphosphate from 1-deoxy-D-xylulose 5-phosphate: step 2/6. Its function is as follows. Catalyzes the formation of 4-diphosphocytidyl-2-C-methyl-D-erythritol from CTP and 2-C-methyl-D-erythritol 4-phosphate (MEP). This Prochlorococcus marinus (strain MIT 9313) protein is 2-C-methyl-D-erythritol 4-phosphate cytidylyltransferase.